The sequence spans 178 residues: Large ribosomal subunit protein uL6 (178 aa).

The span at 155–169 (PYKGKGIKYDNEQIR) shows a compositional bias: basic and acidic residues. Residues 155 to 178 (PYKGKGIKYDNEQIRRKAGKSGGK) are disordered.

Belongs to the universal ribosomal protein uL6 family. In terms of assembly, part of the 50S ribosomal subunit.

This protein binds to the 23S rRNA, and is important in its secondary structure. It is located near the subunit interface in the base of the L7/L12 stalk, and near the tRNA binding site of the peptidyltransferase center. The polypeptide is Large ribosomal subunit protein uL6 (Nitratidesulfovibrio vulgaris (strain DSM 19637 / Miyazaki F) (Desulfovibrio vulgaris)).